The following is a 267-amino-acid chain: tRNA-cytidine(32) 2-sulfurtransferase 2 (267 aa).

The short motif at 42-47 is the PP-loop motif element; it reads SGGKDS. [4Fe-4S] cluster contacts are provided by Cys-117, Cys-120, and Cys-208.

It belongs to the TtcA family. As to quaternary structure, homodimer. The cofactor is Mg(2+). It depends on [4Fe-4S] cluster as a cofactor.

Its subcellular location is the cytoplasm. It catalyses the reaction cytidine(32) in tRNA + S-sulfanyl-L-cysteinyl-[cysteine desulfurase] + AH2 + ATP = 2-thiocytidine(32) in tRNA + L-cysteinyl-[cysteine desulfurase] + A + AMP + diphosphate + H(+). Its pathway is tRNA modification. Its function is as follows. Catalyzes the ATP-dependent 2-thiolation of cytidine in position 32 of tRNA, to form 2-thiocytidine (s(2)C32). The sulfur atoms are provided by the cysteine/cysteine desulfurase (IscS) system. This Francisella tularensis subsp. holarctica (strain FTNF002-00 / FTA) protein is tRNA-cytidine(32) 2-sulfurtransferase 2.